A 183-amino-acid polypeptide reads, in one-letter code: Translocon-associated protein subunit beta (183 aa).

The signal sequence occupies residues 1 to 17; that stretch reads MRLLAVVVLALLAVSQA. The Lumenal segment spans residues 18–146; sequence EEGARLLASK…REFDRRFSPH (129 aa). Residue Asn88 is glycosylated (N-linked (GlcNAc...) (high mannose) asparagine). The N-linked (GlcNAc...) asparagine glycan is linked to Asn104. A helical membrane pass occupies residues 147 to 167; sequence FLDWAAFGVMTLPSIGIPLLL. The Cytoplasmic portion of the chain corresponds to 168 to 183; it reads WYSSKRKYDTPKPKKN.

Belongs to the TRAP-beta family. Heterotetramer of TRAP-alpha, TRAP-beta, TRAP-delta and TRAP-gamma. Interacts with STING1.

The protein localises to the endoplasmic reticulum membrane. Its function is as follows. TRAP proteins are part of a complex whose function is to bind calcium to the ER membrane and thereby regulate the retention of ER resident proteins. The sequence is that of Translocon-associated protein subunit beta (Ssr2) from Mus musculus (Mouse).